The sequence spans 359 residues: WD repeat-containing protein 89 homolog (359 aa).

6 WD repeats span residues 23–62 (IGDD…ILNV), 65–104 (GHKD…CSQT), 106–144 (NQQG…RKFD), 146–186 (SHTE…DDDA), 192–232 (NAED…KIKH), and 294–333 (VHTD…TNIL).

The polypeptide is WD repeat-containing protein 89 homolog (wdr89) (Dictyostelium discoideum (Social amoeba)).